The primary structure comprises 502 residues: Hexokinase-9 (502 aa).

The helical transmembrane segment at 5-24 (AALASAAMAAAAVAVVSTVL) threads the bilayer. Residues 37–488 (RAEAVLLRDL…SGVGAALLAA (452 aa)) enclose the Hexokinase domain. The segment at 92–230 (SGGEKGMFYA…GLDMKVTALV (139 aa)) is hexokinase small subdomain. 3 residues coordinate ADP: Gly-106, Thr-107, and Asn-108. Thr-196, Lys-197, Asn-231, and Asp-232 together coordinate D-glucose. The segment at 231-477 (NDTVGTLAAG…PSVMIKHVND (247 aa)) is hexokinase large subdomain. An ADP-binding site is contributed by Thr-255. Asn-258, Glu-286, and Glu-317 together coordinate D-glucose. Gly-442 contributes to the ADP binding site.

Belongs to the hexokinase family. In terms of tissue distribution, expressed in roots, leaves, flowers, immature seeds, endosperm and seed coat.

The protein localises to the plastid. Its subcellular location is the chloroplast outer membrane. It catalyses the reaction a D-hexose + ATP = a D-hexose 6-phosphate + ADP + H(+). The catalysed reaction is D-fructose + ATP = D-fructose 6-phosphate + ADP + H(+). The enzyme catalyses D-glucose + ATP = D-glucose 6-phosphate + ADP + H(+). Its pathway is carbohydrate metabolism; hexose metabolism. The protein operates within carbohydrate degradation; glycolysis; D-glyceraldehyde 3-phosphate and glycerone phosphate from D-glucose: step 1/4. In terms of biological role, fructose and glucose phosphorylating enzyme. This chain is Hexokinase-9 (HXK9), found in Oryza sativa subsp. japonica (Rice).